The sequence spans 131 residues: Protein ApaG (131 aa).

Positions 7 to 131 (PVKPYDLTVS…FLLAMPRTLH (125 aa)) constitute an ApaG domain.

This chain is Protein ApaG, found in Bordetella bronchiseptica (strain ATCC BAA-588 / NCTC 13252 / RB50) (Alcaligenes bronchisepticus).